The sequence spans 238 residues: uncharacterized protein (238 aa).

This is an uncharacterized protein from Acidianus filamentous virus 2 (isolate Italy/Pozzuoli) (AFV-2).